The primary structure comprises 131 residues: UPF0102 protein YraN (131 aa).

Polar residues predominate over residues 1-19; that stretch reads MATVPTRSGSPRQLTTKQT. The tract at residues 1–21 is disordered; the sequence is MATVPTRSGSPRQLTTKQTGD.

It belongs to the UPF0102 family.

In Escherichia coli O127:H6 (strain E2348/69 / EPEC), this protein is UPF0102 protein YraN.